A 312-amino-acid chain; its full sequence is Aldehyde reductase YPR1 (312 aa).

Tyrosine 56 acts as the Proton donor in catalysis. Histidine 112 contacts substrate. Serine 220–asparagine 274 lines the NADP(+) pocket.

The protein belongs to the aldo/keto reductase family.

The protein localises to the cytoplasm. The catalysed reaction is a primary alcohol + NADP(+) = an aldehyde + NADPH + H(+). The enzyme catalyses 2-methylbutan-1-ol + NADP(+) = 2-methylbutanal + NADPH + H(+). It carries out the reaction hexan-1-ol + NADP(+) = hexanal + NADPH + H(+). Functionally, aldehyde reductase with broad substrate specificity, catalyzing the NADPH-dependent reduction of aldehydes into the corresponding alcohols. In vitro, displays high specific activity towards 2-methylbutanal (2-methylbutyraldehyde), as well as other aldehydes such as hexanal (a toxic lipid peroxidation product and phytoalexin), but exhibits extremely low activity as a glycerol dehydrogenase. Seems to contribute to 2-methylbutanal reduction in vivo, and may therefore play a role in isoleucine catabolism and fusel alcohol formation. This is Aldehyde reductase YPR1 (YPR1) from Saccharomyces cerevisiae (strain ATCC 204508 / S288c) (Baker's yeast).